Here is a 189-residue protein sequence, read N- to C-terminus: MVTYISFIGESQFNFYFASKKFFRLTKYFRDPINSKKFENLIKQAIIRKLPHIVNYISMIIKNNKPEFNNKLFDNLGINEYFRQCVKHNIYNAIDYFVSKDINTVNEYGKTPLITAIKSGNCIMVKKLIDYGADFNKNKIYKLAFDHRHNDIFIFLIDKKIESDKTYNKIRNNFGSICNTNINELVESK.

The ANK repeat unit spans residues 108 to 137 (YGKTPLITAIKSGNCIMVKKLIDYGADFNK).

The sequence is that of Putative ankyrin repeat protein L38 from Acanthamoeba polyphaga mimivirus (APMV).